A 194-amino-acid chain; its full sequence is Cytochrome b-245 light chain (194 aa).

Residues 2–7 lie on the Cytoplasmic side of the membrane; the sequence is GQIEWA. A helical transmembrane segment spans residues 8–30; it reads MWANEQALASGLILVAGGIVATA. Residues 31–35 are Extracellular-facing; that stretch reads GRFTQ. The helical transmembrane segment at 36–53 threads the bilayer; it reads WYFGTYAIAAGVLVCLLE. At 54–69 the chain is on the cytoplasmic side; the sequence is YPRGSRAKGSTLERCG. An intramembrane segment occupies 70-80; sequence QRYLTAVLKLL. At 81 to 86 the chain is on the cytoplasmic side; it reads GPLSRN. Residues 87-104 form a helical membrane-spanning segment; sequence YYFRAALHLALSVPAGFL. Position 105 (leucine 105) is a topological domain, extracellular. The chain crosses the membrane as a helical span at residues 106–126; sequence ATILGTVCLVIASIIYLLAAV. Topologically, residues 127–194 are cytoplasmic; sequence RGEQWTPIEP…NPIPVTDEVV (68 aa). A disordered region spans residues 134 to 194; it reads IEPRPKERPQ…NPIPVTDEVV (61 aa). Residue threonine 147 is modified to Phosphothreonine. Residue lysine 149 forms a Glycyl lysine isopeptide (Lys-Gly) (interchain with G-Cter in ubiquitin) linkage.

The protein belongs to the p22phox family. Component of the phagocyte NADPH oxidase core complex/cytochrome b558 complex, composed of CYBB (heavy chain (beta)) and CYBA (light chain (alpha)). Component of the phagocyte NADPH oxidase complex composed of an obligatory core heterodimer formed by the membrane proteins CYBA and CYBB and the cytosolic regulatory subunits NCF1/p47-phox, NCF2/p67-phox, NCF4/p40-phox and the small GTPase RAC1 or RAC2. Interacts with NCF1 (via SH3 domain). Interacts with SH3PXD2A. Interacts with DUOX1, DUOX2 and TPO. Interacts with NOX4; this interaction mediates superoxide generation. Interacts with calprotectin (S100A8/9). Interacts with GBP7. Interacts with NOXO1. Forms a heterodimer with NOX3 and is essential for activity and cell membrane localization of NOX3. Interacts with NOX1. In terms of processing, phosphorylation at Thr-147 enhances NADPH oxidase activity by promoting NCF1/p47-phox binding. Post-translationally, ubiquitinated at Lys-149 likely by RNF145.

Its subcellular location is the cell membrane. Subunit of NADPH oxidase complexes that is required for the NADPH oxidase activity that generates, in various cell types, superoxide from molecular oxygen utilizing NADPH as an electron donor. Subunit of the phagocyte NADPH oxidase complex that mediates the transfer of electrons from cytosolic NADPH to O2 to produce the superoxide anion (O2(-)). In the activated complex, electrons are first transferred from NADPH to flavin adenine dinucleotide (FAD) and subsequently transferred via two heme molecules to molecular oxygen, producing superoxide through an outer-sphere reaction. Activation of the NADPH oxidase complex is initiated by the assembly of cytosolic subunits of the NADPH oxidase complex with the core NADPH oxidase complex to form a complex at the plasma membrane or phagosomal membrane. This activation process is initiated by phosphorylation dependent binding of the cytosolic NCF1/p47-phox subunit to the C-terminus of CYBA/p22-phox. Aassociates with NOX3 to form a functional NADPH oxidase constitutively generating superoxide. The protein is Cytochrome b-245 light chain of Oryctolagus cuniculus (Rabbit).